Reading from the N-terminus, the 176-residue chain is 2-C-methyl-D-erythritol 2,4-cyclodiphosphate synthase (176 aa).

Residues Asp23, His25, and His60 each contribute to the a divalent metal cation site. 23–25 (DSH) contributes to the 4-CDP-2-C-methyl-D-erythritol 2-phosphate binding site. 149 to 152 (TSGE) contacts 4-CDP-2-C-methyl-D-erythritol 2-phosphate.

This sequence belongs to the IspF family. In terms of assembly, homotrimer. Requires a divalent metal cation as cofactor.

It catalyses the reaction 4-CDP-2-C-methyl-D-erythritol 2-phosphate = 2-C-methyl-D-erythritol 2,4-cyclic diphosphate + CMP. Its pathway is isoprenoid biosynthesis; isopentenyl diphosphate biosynthesis via DXP pathway; isopentenyl diphosphate from 1-deoxy-D-xylulose 5-phosphate: step 4/6. Its function is as follows. Involved in the biosynthesis of isopentenyl diphosphate (IPP) and dimethylallyl diphosphate (DMAPP), two major building blocks of isoprenoid compounds. Catalyzes the conversion of 4-diphosphocytidyl-2-C-methyl-D-erythritol 2-phosphate (CDP-ME2P) to 2-C-methyl-D-erythritol 2,4-cyclodiphosphate (ME-CPP) with a corresponding release of cytidine 5-monophosphate (CMP). The sequence is that of 2-C-methyl-D-erythritol 2,4-cyclodiphosphate synthase from Chlamydia caviae (strain ATCC VR-813 / DSM 19441 / 03DC25 / GPIC) (Chlamydophila caviae).